The sequence spans 127 residues: Glycine cleavage system H protein (127 aa).

Residues 22-104 form the Lipoyl-binding domain; the sequence is KVRIGITDFA…YEKAWMIVVE (83 aa). At lysine 63 the chain carries N6-lipoyllysine.

The protein belongs to the GcvH family. In terms of assembly, the glycine cleavage system is composed of four proteins: P, T, L and H. Requires (R)-lipoate as cofactor.

Functionally, the glycine cleavage system catalyzes the degradation of glycine. The H protein shuttles the methylamine group of glycine from the P protein to the T protein. Its function is as follows. Is also involved in protein lipoylation via its role as an octanoyl/lipoyl carrier protein intermediate. The sequence is that of Glycine cleavage system H protein from Bacillus licheniformis (strain ATCC 14580 / DSM 13 / JCM 2505 / CCUG 7422 / NBRC 12200 / NCIMB 9375 / NCTC 10341 / NRRL NRS-1264 / Gibson 46).